Consider the following 509-residue polypeptide: 2-isopropylmalate synthase (509 aa).

One can recognise a Pyruvate carboxyltransferase domain in the interval 5-267 (IQIFDTTLRD…QTALNLEETK (263 aa)). Mn(2+)-binding residues include Asp14, His202, His204, and Asn238. The segment at 391–509 (KLETLQLQYV…AAENVEKVGN (119 aa)) is regulatory domain.

It belongs to the alpha-IPM synthase/homocitrate synthase family. LeuA type 1 subfamily. In terms of assembly, homodimer. Mn(2+) is required as a cofactor.

Its subcellular location is the cytoplasm. The enzyme catalyses 3-methyl-2-oxobutanoate + acetyl-CoA + H2O = (2S)-2-isopropylmalate + CoA + H(+). The protein operates within amino-acid biosynthesis; L-leucine biosynthesis; L-leucine from 3-methyl-2-oxobutanoate: step 1/4. Catalyzes the condensation of the acetyl group of acetyl-CoA with 3-methyl-2-oxobutanoate (2-ketoisovalerate) to form 3-carboxy-3-hydroxy-4-methylpentanoate (2-isopropylmalate). This chain is 2-isopropylmalate synthase, found in Staphylococcus aureus (strain MW2).